A 234-amino-acid chain; its full sequence is Glucosamine-6-phosphate deaminase (234 aa).

The active-site Proton acceptor; for enolization step is aspartate 62. The For ring-opening step role is filled by asparagine 128. Histidine 130 acts as the Proton acceptor; for ring-opening step in catalysis. Glutamate 135 (for ring-opening step) is an active-site residue.

The protein belongs to the glucosamine/galactosamine-6-phosphate isomerase family. NagB subfamily.

The enzyme catalyses alpha-D-glucosamine 6-phosphate + H2O = beta-D-fructose 6-phosphate + NH4(+). It participates in amino-sugar metabolism; N-acetylneuraminate degradation; D-fructose 6-phosphate from N-acetylneuraminate: step 5/5. Functionally, catalyzes the reversible isomerization-deamination of glucosamine 6-phosphate (GlcN6P) to form fructose 6-phosphate (Fru6P) and ammonium ion. The sequence is that of Glucosamine-6-phosphate deaminase from Streptococcus pyogenes serotype M3 (strain ATCC BAA-595 / MGAS315).